The primary structure comprises 194 residues: Peptidyl-tRNA hydrolase (194 aa).

Tyr-16 contacts tRNA. The active-site Proton acceptor is His-21. Phe-67, Asn-69, and Asn-115 together coordinate tRNA.

This sequence belongs to the PTH family. As to quaternary structure, monomer.

The protein resides in the cytoplasm. It catalyses the reaction an N-acyl-L-alpha-aminoacyl-tRNA + H2O = an N-acyl-L-amino acid + a tRNA + H(+). Its function is as follows. Hydrolyzes ribosome-free peptidyl-tRNAs (with 1 or more amino acids incorporated), which drop off the ribosome during protein synthesis, or as a result of ribosome stalling. Functionally, catalyzes the release of premature peptidyl moieties from peptidyl-tRNA molecules trapped in stalled 50S ribosomal subunits, and thus maintains levels of free tRNAs and 50S ribosomes. The chain is Peptidyl-tRNA hydrolase from Shigella boydii serotype 18 (strain CDC 3083-94 / BS512).